The primary structure comprises 388 residues: MEVDPGSDDVEADRETRAQKLKLKRNVKFRAQMRRFDEYCGVTNLTVDDLNWPLISGIPLQRQRLTGATYYDDSLLDQNPWDEFSIDRFLEITSIQLITAGAGYERNDEITRFVFQRTMKTIVTYCNFMYDLARRNGKVQITRFELQDLIHRDEFRFYMYFRQFLPNPDPNCTAFSNHYTSLLHTLYFNIPGMPQFWNNSQMYNYAATRGQRLVQNIAAFYPPEYFWNEDESKYHTTFVVPRGTEFSKFYARRFHEALGMPPLENEIITVLDWLAKLCILEIVYHTTIWCDITGFGGLPRIEHYRLAMENVEDIIFDLAIDDFSISRLQLQISPFEISRYSPLDVSGYYETIKRKKDIEEYQNRFYEVHYSDDVRIMNVYATDCSRKR.

6 repeat units span residues 7-10 (SDDV), 110-113 (ITRF), 141-144 (ITRF), 234-237 (YHTT), 284-287 (YHTT), and 371-374 (SDDV).

Component of a complex containing fem-1, fem-2 and fem-3. Interacts with fem-1 and fem-2 (via N-terminus). Part of a E3 ubiquitin-protein ligase complex, at least composed of cul-2, elc-1, tra-1, fem-1, fem-2 and fem-3; mediates the ubiquitination and subsequent proteasomal degradation of tra-1. Interacts with tra-1. Interacts with sel-10. Interacts with tra-2.

Required for male development. In XO (male) animals, fem-3 directs male differentiation in all tissues. In XX (hermaphrodite) animals, it specifies the first 80 or so germ cells to be sperm. Negatively regulates male development when bound to tra-2. Together with fem-2 associates with the CBC(fem-1) E3 ubiquitin-protein ligase complex which mediates the ubiquitination and subsequent proteasomal degradation of tra-1. The chain is Sex-determination protein fem-3 (fem-3) from Caenorhabditis elegans.